We begin with the raw amino-acid sequence, 343 residues long: Glucokinase (343 aa).

An ATP-binding site is contributed by 21-26 (ADVGGT).

The protein belongs to the bacterial glucokinase family.

The protein localises to the cytoplasm. It catalyses the reaction D-glucose + ATP = D-glucose 6-phosphate + ADP + H(+). In Cupriavidus pinatubonensis (strain JMP 134 / LMG 1197) (Cupriavidus necator (strain JMP 134)), this protein is Glucokinase.